The sequence spans 413 residues: Patatin-like protein 3 (413 aa).

The PNPLA domain occupies 54-245 (LSVDGGARPE…ALGNPTAAAI (192 aa)). Positions 58–61 (GGAR) match the GGXR motif. Ser-100 acts as the Nucleophile in catalysis. The interval 384–413 (EHGRRKQHVPPAASGGGGGGLDCHVSKKQP) is disordered.

Belongs to the patatin family.

Its function is as follows. Possesses non-specific lipolytic acyl hydrolase (LAH) activity. Hydrolyzes phospholipids as well as galactolipids. May play a role in disease resistance. This is Patatin-like protein 3 (PLP3) from Oryza sativa subsp. indica (Rice).